Reading from the N-terminus, the 448-residue chain is Probable D-serine dehydratase (448 aa).

The residue at position 119 (Lys-119) is an N6-(pyridoxal phosphate)lysine.

Belongs to the serine/threonine dehydratase family. DsdA subfamily. It depends on pyridoxal 5'-phosphate as a cofactor.

It carries out the reaction D-serine = pyruvate + NH4(+). The polypeptide is Probable D-serine dehydratase (Pseudomonas aeruginosa (strain UCBPP-PA14)).